The following is a 236-amino-acid chain: Phosphoribosylaminoimidazole-succinocarboxamide synthase (236 aa).

This sequence belongs to the SAICAR synthetase family.

It carries out the reaction 5-amino-1-(5-phospho-D-ribosyl)imidazole-4-carboxylate + L-aspartate + ATP = (2S)-2-[5-amino-1-(5-phospho-beta-D-ribosyl)imidazole-4-carboxamido]succinate + ADP + phosphate + 2 H(+). It functions in the pathway purine metabolism; IMP biosynthesis via de novo pathway; 5-amino-1-(5-phospho-D-ribosyl)imidazole-4-carboxamide from 5-amino-1-(5-phospho-D-ribosyl)imidazole-4-carboxylate: step 1/2. In Pseudomonas syringae pv. tomato (strain ATCC BAA-871 / DC3000), this protein is Phosphoribosylaminoimidazole-succinocarboxamide synthase.